We begin with the raw amino-acid sequence, 60 residues long: Metallothionein B (60 aa).

Residues 1 to 28 (MDPCECSKTGSCNCGGSCKCSNCACTSC) form a beta region. Positions 4, 6, 12, 14, 18, 20, 23, 25, 28, 32, 33, 35, 36, 40, 43, 47, 49, 54, 58, and 59 each coordinate a divalent metal cation. The tract at residues 29-60 (KKSCCPCCPSDCSKCASGCVCKGKTCDTSCCQ) is alpha.

It belongs to the metallothionein superfamily. Type 1 family.

Metallothioneins have a high content of cysteine residues that bind various heavy metals. The polypeptide is Metallothionein B (mtb) (Oncorhynchus mykiss (Rainbow trout)).